Reading from the N-terminus, the 307-residue chain is Metapyrocatechase (307 aa).

VOC domains follow at residues 7 to 122 (RPGH…LYAD) and 150 to 269 (RFDH…VFCG). Positions 153, 214, and 265 each coordinate Fe cation.

Belongs to the extradiol ring-cleavage dioxygenase family. In terms of assembly, homotetramer. It depends on Fe(2+) as a cofactor.

It catalyses the reaction catechol + O2 = (2Z,4E)-2-hydroxy-6-oxohexa-2,4-dienoate + H(+). The protein operates within xenobiotic degradation; toluene degradation. In Pseudomonas aeruginosa, this protein is Metapyrocatechase (bztE).